The primary structure comprises 313 residues: MKKLVIATRGSQLALWQSNHIKAILQEQNPGLEVELNVIVTTGDRIQDKALSKIGGKGLFLKELEEAMLQGEAQIAVHSLKDVPTVMPDGLILAAITEREDSRDALLSEKYANIDALPKNAVVGTSSLRRRMQIQKLRPDLIIKDLRGNVDTRIRKLKEGEFDAIILAAAGINRLSLLDAVKHVYPISLEEMVPSMGQGALGIEAVNDAEVLRIVAGLEDEYSRIETTIERSFVDELEGGCQVPIGVNASVLDDGTISIRAVLGLPNGEEMLSDSKITSKKDYENIGREIAAEFIEKGAKELLSRAEAMMENK.

Cysteine 241 is subject to S-(dipyrrolylmethanemethyl)cysteine.

Belongs to the HMBS family. Monomer. The cofactor is dipyrromethane.

It carries out the reaction 4 porphobilinogen + H2O = hydroxymethylbilane + 4 NH4(+). Its pathway is porphyrin-containing compound metabolism; protoporphyrin-IX biosynthesis; coproporphyrinogen-III from 5-aminolevulinate: step 2/4. Tetrapolymerization of the monopyrrole PBG into the hydroxymethylbilane pre-uroporphyrinogen in several discrete steps. This Sulfurimonas denitrificans (strain ATCC 33889 / DSM 1251) (Thiomicrospira denitrificans (strain ATCC 33889 / DSM 1251)) protein is Porphobilinogen deaminase.